The following is a 218-amino-acid chain: uncharacterized protein (218 aa).

The next 5 membrane-spanning stretches (helical) occupy residues 27 to 49, 57 to 77, 115 to 135, 142 to 162, and 180 to 200; these read IALENAGIPIPGETITLLGGFLA, GGVLIAAIAGAVLGDSCGYWV, VFFGRFVTLLRIFAGPMAGIV, FLLYNIGGASVWAAITVSLAY, and FSWFALAAVVGMVGIYFVFHF.

It belongs to the DedA family.

It is found in the cell membrane. This is an uncharacterized protein from Synechocystis sp. (strain ATCC 27184 / PCC 6803 / Kazusa).